The following is a 274-amino-acid chain: Transcription factor Ovo-like 2 (274 aa).

Positions 1–11 (MPKVFLVKRRS) are enriched in basic residues. Residues 1-88 (MPKVFLVKRR…ETPELHDAQG (88 aa)) form a disordered region. The span at 18–29 (SWDELPDDKRAD) shows a compositional bias: basic and acidic residues. The span at 50–74 (DGGSSSGCSSSAGEPGGAESSSSPR) shows a compositional bias: low complexity. C2H2-type zinc fingers lie at residues 118–140 (HNCD…LKCH), 146–168 (HLCT…VRTH), 174–197 (YKCE…KKIH), and 213–236 (YVCE…NSDH). Ser-268 is subject to Phosphoserine.

The protein belongs to the krueppel C2H2-type zinc-finger protein family. Interacts (via zinc-finger domains) with CEBPA (via bZIP domain); the interaction inhibits the transcription factor activity of CEBPA and is required to repress adipogenesis. As to expression, expressed highly in testis, specifically in spermatocytes. Expressed also in skin and at lower levels in the ovary. Expressed in adipose tissues. Expression is lower than in testis and a relatively higher expression level is detected in the stromal vascular fraction (SVF) than in fat cells themselves.

It is found in the nucleus. Its function is as follows. Zinc-finger transcription repressor factor. Plays a critical role in maintaining the identity of epithelial lineages by suppressing epithelial-to mesenchymal transition (EMT) mainly through the repression of ZEB1, an EMT inducer. Positively regulates neuronal differentiation. Suppresses cell cycling and terminal differentiation of keratinocytes by directly repressing MYC and NOTCH1. Important for the correct development of primordial germ cells in embryos. Plays dual functions in thermogenesis and adipogenesis to maintain energy balance. Essential for brown/beige adipose tissue-mediated thermogenesis, is necessary for the development of brown adipocytes. In white adipose tissues, limits adipogenesis by blocking CEBPA binding to its transcriptional targets and inhibiting its transcription factor activity. The protein is Transcription factor Ovo-like 2 of Mus musculus (Mouse).